Reading from the N-terminus, the 464-residue chain is Tyrosine--tRNA ligase, mitochondrial (464 aa).

Tyrosine 61 lines the L-tyrosine pocket. Aspartate 65 lines the ATP pocket. The short motif at 66–75 is the 'HIGH' region element; that stretch reads PTADSLHVGN. 5 residues coordinate L-tyrosine: aspartate 105, tyrosine 209, glutamine 213, aspartate 216, and glutamine 235. Residues 270-274 carry the 'KMSKS' region motif; that stretch reads KFGKS. ATP is bound at residue lysine 273.

The protein belongs to the class-I aminoacyl-tRNA synthetase family. In terms of assembly, homodimer.

It localises to the mitochondrion matrix. It catalyses the reaction tRNA(Tyr) + L-tyrosine + ATP = L-tyrosyl-tRNA(Tyr) + AMP + diphosphate + H(+). In terms of biological role, catalyzes the attachment of tyrosine to tRNA(Tyr) in a two-step reaction: tyrosine is first activated by ATP to form Tyr-AMP and then transferred to the acceptor end of tRNA(Tyr). The polypeptide is Tyrosine--tRNA ligase, mitochondrial (Drosophila melanogaster (Fruit fly)).